Here is a 324-residue protein sequence, read N- to C-terminus: Phospho-N-acetylmuramoyl-pentapeptide-transferase (324 aa).

Transmembrane regions (helical) follow at residues 13–33, 59–79, 85–105, 121–141, 143–163, 179–199, 201–221, 243–263, and 303–323; these read VLSALLMGFAFSMVLGPIFIP, PTMGGLIFFISVTVTMLIIGY, GMVVLYSLIAFGIIGFLDDIL, MILLLLFSIALAYYGYTNIGT, IIIPFMNSKLNLGIFYIPLVV, IDGLASSVTVIVLTFFAIVGF, TGHYQVGVFSIALAGALLGFL, AIATIALILKMPLFIIIVGGI, and VKLVTVFSIITLILCIIGFIA.

The protein belongs to the glycosyltransferase 4 family. MraY subfamily. Mg(2+) is required as a cofactor.

The protein resides in the cell membrane. The enzyme catalyses UDP-N-acetyl-alpha-D-muramoyl-L-alanyl-gamma-D-glutamyl-meso-2,6-diaminopimeloyl-D-alanyl-D-alanine + di-trans,octa-cis-undecaprenyl phosphate = di-trans,octa-cis-undecaprenyl diphospho-N-acetyl-alpha-D-muramoyl-L-alanyl-D-glutamyl-meso-2,6-diaminopimeloyl-D-alanyl-D-alanine + UMP. Its pathway is cell wall biogenesis; peptidoglycan biosynthesis. In terms of biological role, catalyzes the initial step of the lipid cycle reactions in the biosynthesis of the cell wall peptidoglycan: transfers peptidoglycan precursor phospho-MurNAc-pentapeptide from UDP-MurNAc-pentapeptide onto the lipid carrier undecaprenyl phosphate, yielding undecaprenyl-pyrophosphoryl-MurNAc-pentapeptide, known as lipid I. The chain is Phospho-N-acetylmuramoyl-pentapeptide-transferase from Clostridium botulinum (strain Alaska E43 / Type E3).